A 447-amino-acid polypeptide reads, in one-letter code: Tubulin beta chain (447 aa).

GTP-binding residues include Q11, E69, S138, G142, T143, G144, N204, and N226. E69 is a Mg(2+) binding site. A disordered region spans residues 424-447; sequence QYQEASVSDAEEEYDEEAPLEGEE. A compositionally biased stretch (acidic residues) spans 432-447; that stretch reads DAEEEYDEEAPLEGEE.

It belongs to the tubulin family. In terms of assembly, dimer of alpha and beta chains. A typical microtubule is a hollow water-filled tube with an outer diameter of 25 nm and an inner diameter of 15 nM. Alpha-beta heterodimers associate head-to-tail to form protofilaments running lengthwise along the microtubule wall with the beta-tubulin subunit facing the microtubule plus end conferring a structural polarity. Microtubules usually have 13 protofilaments but different protofilament numbers can be found in some organisms and specialized cells. Mg(2+) serves as cofactor.

Its subcellular location is the cytoplasm. It is found in the cytoskeleton. In terms of biological role, tubulin is the major constituent of microtubules, a cylinder consisting of laterally associated linear protofilaments composed of alpha- and beta-tubulin heterodimers. Microtubules grow by the addition of GTP-tubulin dimers to the microtubule end, where a stabilizing cap forms. Below the cap, tubulin dimers are in GDP-bound state, owing to GTPase activity of alpha-tubulin. The protein is Tubulin beta chain (TUB1) of Zymoseptoria tritici (Speckled leaf blotch fungus).